The chain runs to 258 residues: uncharacterized protein (258 aa).

Helical transmembrane passes span 8–28, 38–58, 70–90, 121–141, 176–196, 204–224, and 231–251; these read VFLALSGAIAFLLPIGLIVWF, VFFIGALTFFVFAQLLEGGVH, EAMQHPLWYGIYGCLMAGIFE, LEAILITGLSSISLIVYAFAI, LGGIERISAIAVQIGLSLLVL, PLFLLYSILLHALFNVPAVLY, and HAAAVEIIVALIAALSVYWIV.

It is found in the cell membrane. This is an uncharacterized protein from Bacillus subtilis (strain 168).